The following is a 116-amino-acid chain: Cell cycle protein GpsB (116 aa).

Residues 32-69 (LDDVIKDYETYSALVKELREENSRLKQELSKRMQEAPN) are a coiled coil. Residues 57–78 (KQELSKRMQEAPNSTASQVHQS) form a disordered region. Over residues 67-78 (APNSTASQVHQS) the composition is skewed to polar residues.

It belongs to the GpsB family. As to quaternary structure, forms polymers through the coiled coil domains. Interacts with PBP1, MreC and EzrA.

The protein resides in the cytoplasm. In terms of biological role, divisome component that associates with the complex late in its assembly, after the Z-ring is formed, and is dependent on DivIC and PBP2B for its recruitment to the divisome. Together with EzrA, is a key component of the system that regulates PBP1 localization during cell cycle progression. Its main role could be the removal of PBP1 from the cell pole after pole maturation is completed. Also contributes to the recruitment of PBP1 to the division complex. Not essential for septum formation. The chain is Cell cycle protein GpsB from Streptococcus gordonii (strain Challis / ATCC 35105 / BCRC 15272 / CH1 / DL1 / V288).